A 166-amino-acid chain; its full sequence is Mitochondrial fission process protein 1 (166 aa).

A run of 3 helical transmembrane segments spans residues 33–53 (SLVKPVVVKFSYVVAFGYVAA), 78–98 (AIAAVDTVLWQTFASVLIPGF), and 125–145 (TVTCLGLATIPFIVHPIDSFV).

It belongs to the MTFP1 family.

The protein resides in the mitochondrion inner membrane. Involved in the mitochondrial division probably by regulating membrane fission. Loss-of-function leads to apoptosis. This is Mitochondrial fission process protein 1 (mtp-18) from Caenorhabditis elegans.